Reading from the N-terminus, the 467-residue chain is Venom prothrombin activator pseutarin-C catalytic subunit (467 aa).

The signal sequence occupies residues 1–22; the sequence is MAPQLLLCLILTFLWSLPEAES. Positions 23–40 are excised as a propeptide; it reads NVFLKSKVANRFLQRTKR. The region spanning 41–86 is the Gla domain; the sequence is ANSLVEEFKSGNIERECIEERCSKEEAREVFEDDEKTETFWNVYVD. E46, E47, E54, E56, E59, E60, E65, E66, E69, and E72 each carry 4-carboxyglutamate. C57 and C62 are disulfide-bonded. Positions 86 to 122 constitute an EGF-like 1; calcium-binding domain; sequence DGDQCSSNPCHYRGICKDGIGSYTCTCLSGYEGKNCE. 11 disulfide bridges follow: C90–C101, C95–C110, C112–C121, C129–C140, C136–C149, C151–C164, C172–C329, C216–C221, C236–C252, C377–C391, and C402–C430. S92 carries O-linked (Hex...) serine glycosylation. The region spanning 129–164 is the EGF-like 2 domain; the sequence is CRVDNGNCWHFCKSVQNDIQCSCAEGYLLGEDGHSC. Positions 182–209 are cleaved as a propeptide — activation peptide; the sequence is REASLPDFVQSHNATLLKKSDNPSPDIR. One can recognise a Peptidase S1 domain in the interval 210-454; the sequence is IVNGMDCKLG…FIPWIKRIMR (245 aa). H251 serves as the catalytic Charge relay system. Residue N254 is glycosylated (N-linked (GlcNAc...) asparagine). Catalysis depends on D309, which acts as the Charge relay system. S406 (charge relay system) is an active-site residue.

Belongs to the peptidase S1 family. Snake venom subfamily. In terms of assembly, heterodimer of a light and a heavy chains; disulfide-linked. Is associated with pseutarin-C non-catalytic subunit (AC Q7SZN0) in a non-covalent manner. In terms of processing, gamma-carboxyglutamate residues are formed by vitamin K dependent carboxylation. These residues are essential for the binding of calcium. Expressed by the venom gland.

It localises to the secreted. It carries out the reaction Selective cleavage of Arg-|-Thr and then Arg-|-Ile bonds in prothrombin to form thrombin.. With respect to regulation, activated by calcium and negatively charged phospholipids. Snake prothrombin activator that attacks the hemostatic system of prey. This non-catalytic subunit is functionally similar to blood coagulation factor V. It serves as a critical cofactor for the prothrombinase activity of the catalytic subunit, which is similar to the blood coagulation factor X. The complex converts prothrombin to thrombin by sequential cleavage at two positions, Arg-320 followed by Arg-271. Cleavage at Arg-320 produces an active intermediate known as meizothrombin. Meizothrombin is the 'second' substrate for prothrombinase, and it docks in an altered manner to present the second cleavage site (271). Cleavage at Arg-271 releases active thrombin from its pro-fragment. This order of events is reversed if the protease component of prothrombinase is used on its own, suggesting that the 271 site is inherently more accessible to proteolysis. The complex converts prothrombin to thrombin in presence but also in the absence of membrane. The chain is Venom prothrombin activator pseutarin-C catalytic subunit from Pseudonaja textilis (Eastern brown snake).